Reading from the N-terminus, the 653-residue chain is 23S rRNA 5-hydroxycytidine C2501 synthase (653 aa).

This sequence belongs to the peptidase U32 family. Interacts with precursors of the 50S ribosomal subunit.

With respect to regulation, iron-sulfur clusters and prephenate are required for ho5C2501 formation. Responsible for the formation of the 5-hydroxycytidine modification at the C2501 position (ho5C2501) of 23S rRNA. May be a Fe-S protein that catalyzes ho5C2501 formation using prephenate as a hydroxyl group donor. The protein is 23S rRNA 5-hydroxycytidine C2501 synthase of Escherichia coli (strain K12).